Here is a 199-residue protein sequence, read N- to C-terminus: Probable thymidylate kinase (199 aa).

9–16 contacts ATP; sequence GIDGCGKT.

Belongs to the thymidylate kinase family.

The catalysed reaction is dTMP + ATP = dTDP + ADP. The sequence is that of Probable thymidylate kinase from Methanococcus maripaludis (strain C7 / ATCC BAA-1331).